We begin with the raw amino-acid sequence, 1365 residues long: MEKNLRYKLHKVKKQWVAIGVTTVTLSFLAGGQVVAADTNNNDGTSVQVNKMVPSDPKFDAQAQNGQLAQAMFKAANQADQTATSQVSPATDGRVDNQVTPAANQPAANVANQDVANPATDAGALNRQSAADTSTDGKAVPQTSDQPGHLETVDGKTYYVDANGQRLKNYSMVIDGKTYYFDGQTGEAQTDLPKTGQANQDNVPDSYQANNQAYSNEASSFETVDNYLTADSWYRPRKILKNGQSWQASSEGDLRPILMTWWPDAATKAAYANFWAKEGLISGSYRQNSANLDAATQNIQSAIEKKIASEGNTNWLRDKMSQFVKSQNQWSIASENETVYPNQDHMQGGALLFSNSKDTEHANSDWRLLNRNPTFQTGKQKYFTTNYAGYELLLANDVDNSNPVVQAEQLNHLHYLMNWGDIVMGDKDANFDGVRVDAVDNVNADLLQIQRDYYKAKYGTDQNEKNAIDHLSILEAWSGNDNDYVKDQNNFSLSIDNDQRSGMLKAFGYASAYRGNLSNLATAGLKNRSANPDSDPVPNYVFIRAHDSEVQTRIAKIIREKLGKTNADGLTNLTLDDLNKAFDIYNQDMNATDKVYYPNNLPMAYAWMLQNKDTVTRVYYGDMYTDNGQYMATKTPFYNAIETLLKGRIKYVAGGQAVSYKQDWSSGILTSVRYGKGANSASDAGNTETRNSGMALLINNRPNFRAYRNLTLNMGAAHKSQAYRPLLLSTKDGIATYLNDSDVDSRQYKYTDSQGNLSFSASELQSVANAQVSGMIQVWVPVGAADNQDVRTSPSTQATKDGNIYHQSDALDSQVIYEGFSNFQAFAQSPDQYTNAVIAKNGDLFKSWGITQFEMAPQYVSSEDGTFLDSVILNGYAFSDRYDLAMSKNNKYGSKQDLANAIKGLQSAGIKVLSDLVPNQLYNLPGKEVVTATRVNQYGQAKSGATINKTPYVANTRSYGDYQEQYGGKFLDDLQKLYPRLFSTKQISTGKPIDPSVKITNWSAKYFNGSNILGRGAKYVLSEGNKYLNLADGKLFLPTVLNNTYGQPQVSANGFISKNGGIHYLDKNGQEVKNRFKEISGSWYYFDSDGKMATGKTKIGNDTYLFMPNGKQLKEGVWYDGKKAYYYDDNGRTWTNKGFVEFRVDGQDKWRYFNGDGTIAIGLVSLDNRTLYFDAYGYQVKGQTVTINGKSYTFDADQGDLVQTDNANPAPQGQAGWKLLGDNQWGYRKDGQLLTGEQTIDGQKVFFQDNGVQVKGGTATDASGVLRFYDRDQGHQVGKGWYSTSDDNWVYVNESGQVLTGLQTIDGQTVYFDDKGIQAKGKAVWDENGNLRYFDADSGNMLRDRWKNVDGNWYYFNRNGLATRW.

A signal peptide (or 37) is located at residues 1-36; it reads MEKNLRYKLHKVKKQWVAIGVTTVTLSFLAGGQVVA. Polar residues-rich tracts occupy residues 80–89 and 127–146; these read DQTATSQVSP and RQSA…TSDQ. 2 disordered regions span residues 80 to 99 and 127 to 152; these read DQTA…DNQV and RQSA…HLET. Cell wall-binding repeat units lie at residues 146-166 and 168-187; these read QPGH…NGQR and KNYS…QTGE. The interval 200–1000 is catalytic; approximate; that stretch reads QDNVPDSYQA…KPIDPSVKIT (801 aa). 10 Cell wall-binding repeats span residues 1052-1071, 1073-1092, 1093-1112, 1113-1133, 1136-1159, 1160-1179, 1234-1253, 1278-1298, 1299-1318, and 1343-1362; these read ANGF…NGQE, KNRF…DGKM, ATGK…NGKQ, LKEG…NGRT, NKGF…DGTI, AIGL…YGYQ, LTGE…NGVQ, GKGW…SGQV, LTGL…KGIQ, and RDRW…NGLA.

The protein belongs to the glycosyl hydrolase 70 family.

The catalysed reaction is [(1-&gt;6)-alpha-D-glucosyl](n) + sucrose = [(1-&gt;6)-alpha-D-glucosyl](n+1) + D-fructose. Its activity is regulated as follows. Glucan synthesis by GTF-S is independent of primer glucan unlike GTF-I. In terms of biological role, production of extracellular glucans, that are thought to play a key role in the development of the dental plaque because of their ability to adhere to smooth surfaces and mediate the aggregation of bacterial cells and food debris. The protein is Glucosyltransferase-S (gtfS) of Streptococcus downei (Streptococcus sobrinus).